We begin with the raw amino-acid sequence, 112 residues long: Phosphoribosyl-ATP pyrophosphatase (112 aa).

Belongs to the PRA-PH family.

It localises to the cytoplasm. The catalysed reaction is 1-(5-phospho-beta-D-ribosyl)-ATP + H2O = 1-(5-phospho-beta-D-ribosyl)-5'-AMP + diphosphate + H(+). It participates in amino-acid biosynthesis; L-histidine biosynthesis; L-histidine from 5-phospho-alpha-D-ribose 1-diphosphate: step 2/9. The polypeptide is Phosphoribosyl-ATP pyrophosphatase (Chromohalobacter salexigens (strain ATCC BAA-138 / DSM 3043 / CIP 106854 / NCIMB 13768 / 1H11)).